The sequence spans 308 residues: Ribosomal RNA large subunit methyltransferase F (308 aa).

This sequence belongs to the methyltransferase superfamily. METTL16/RlmF family.

The protein localises to the cytoplasm. It catalyses the reaction adenosine(1618) in 23S rRNA + S-adenosyl-L-methionine = N(6)-methyladenosine(1618) in 23S rRNA + S-adenosyl-L-homocysteine + H(+). In terms of biological role, specifically methylates the adenine in position 1618 of 23S rRNA. In Escherichia coli (strain SMS-3-5 / SECEC), this protein is Ribosomal RNA large subunit methyltransferase F.